The primary structure comprises 134 residues: MGTLQGAALRSRERPSWPQETHGHRERTEEGCAVAAFSADALRTGGQELEQTGLRPKAGAPPMPDLLGHRICTDIGKGWRMDGGRTCSCSSFCRCPERGARRSSPDAPGLALDFPLLLDLLWHLCSWTSQPLEL.

A disordered region spans residues 1-30 (MGTLQGAALRSRERPSWPQETHGHRERTEE). Residues 10–30 (RSRERPSWPQETHGHRERTEE) show a composition bias toward basic and acidic residues.

This is an uncharacterized protein from Homo sapiens (Human).